The primary structure comprises 553 residues: Hydroxylamine reductase (553 aa).

[2Fe-2S] cluster contacts are provided by Cys3, Cys6, Cys18, and Cys25. Hybrid [4Fe-2O-2S] cluster contacts are provided by His252, Glu276, Cys320, Cys408, Cys436, Cys461, Glu495, and Lys497. Position 408 is a cysteine persulfide (Cys408).

Belongs to the HCP family. The cofactor is [2Fe-2S] cluster. Hybrid [4Fe-2O-2S] cluster is required as a cofactor.

It is found in the cytoplasm. The catalysed reaction is A + NH4(+) + H2O = hydroxylamine + AH2 + H(+). Its function is as follows. Catalyzes the reduction of hydroxylamine to form NH(3) and H(2)O. This chain is Hydroxylamine reductase, found in Tolumonas auensis (strain DSM 9187 / NBRC 110442 / TA 4).